Here is a 438-residue protein sequence, read N- to C-terminus: Protein c-ets-1-A (438 aa).

The PNT domain maps to 49-134 (ATFSRFTKEQ…EHLEILQKDS (86 aa)). The tract at residues 128 to 240 (EILQKDSKQY…DNMCLGRISR (113 aa)) is activation domain; required for transcription activation. Positions 301–309 (FKDYVRDRA) are helix HI-1. Residues 320 to 327 (AAALAGYT) are helix HI-2. A DNA-binding region (ETS) is located at residues 332–412 (IQLWQFLLEL…AGKRYVYRFV (81 aa)). Positions 415 to 419 (LQSLL) are helix H4. The helix H5 stretch occupies residues 423-429 (PEELHAM).

Belongs to the ETS family. Binds DNA as a homodimer; homodimerization is required for transcription activation.

The protein resides in the nucleus. It is found in the cytoplasm. Autoinhibited by a module composed of four alpha helices (HI-1, HI-2, H4, and H5) that flank the DNA-binding ETS domain, reducing the affinity for DNA. Functionally, transcription factor. Directly controls the expression of cytokine and chemokine genes in a wide variety of different cellular contexts. The polypeptide is Protein c-ets-1-A (ets1-a) (Xenopus laevis (African clawed frog)).